Reading from the N-terminus, the 362-residue chain is Innexin-17 (362 aa).

The next 4 membrane-spanning stretches (helical) occupy residues 27 to 47 (YFTV…QYVG), 101 to 121 (WVPF…VIWN), 189 to 209 (FLAT…MGLG), and 266 to 286 (LFIA…FDIF).

The protein belongs to the pannexin family.

It is found in the cell membrane. It localises to the cell junction. The protein resides in the gap junction. Functionally, structural component of the gap junctions. The sequence is that of Innexin-17 from Caenorhabditis elegans.